Here is a 276-residue protein sequence, read N- to C-terminus: Pantothenate synthetase (276 aa).

ATP is bound at residue 27 to 34 (MGALHRGH). The active-site Proton donor is H34. Q58 is a (R)-pantoate binding site. Q58 is a beta-alanine binding site. An ATP-binding site is contributed by 147 to 150 (GKKD). Q153 provides a ligand contact to (R)-pantoate. ATP contacts are provided by residues A176 and 184 to 187 (LSSR).

This sequence belongs to the pantothenate synthetase family. In terms of assembly, homodimer.

Its subcellular location is the cytoplasm. It catalyses the reaction (R)-pantoate + beta-alanine + ATP = (R)-pantothenate + AMP + diphosphate + H(+). It participates in cofactor biosynthesis; (R)-pantothenate biosynthesis; (R)-pantothenate from (R)-pantoate and beta-alanine: step 1/1. Functionally, catalyzes the condensation of pantoate with beta-alanine in an ATP-dependent reaction via a pantoyl-adenylate intermediate. The protein is Pantothenate synthetase of Helicobacter pylori (strain P12).